The chain runs to 256 residues: uncharacterized protein (256 aa).

This sequence belongs to the methyltransferase superfamily.

The protein localises to the cytoplasm. It is found in the nucleus. Probable methyltransferase. This is an uncharacterized protein from Schizosaccharomyces pombe (strain 972 / ATCC 24843) (Fission yeast).